A 154-amino-acid chain; its full sequence is 6,7-dimethyl-8-ribityllumazine synthase (154 aa).

5-amino-6-(D-ribitylamino)uracil is bound by residues Phe22, 56–58 (AFE), and 80–82 (AVI). Residue 85-86 (AT) coordinates (2S)-2-hydroxy-3-oxobutyl phosphate. His88 functions as the Proton donor in the catalytic mechanism. Residue Phe113 coordinates 5-amino-6-(D-ribitylamino)uracil. Residue Arg127 coordinates (2S)-2-hydroxy-3-oxobutyl phosphate.

It belongs to the DMRL synthase family.

It catalyses the reaction (2S)-2-hydroxy-3-oxobutyl phosphate + 5-amino-6-(D-ribitylamino)uracil = 6,7-dimethyl-8-(1-D-ribityl)lumazine + phosphate + 2 H2O + H(+). The protein operates within cofactor biosynthesis; riboflavin biosynthesis; riboflavin from 2-hydroxy-3-oxobutyl phosphate and 5-amino-6-(D-ribitylamino)uracil: step 1/2. Functionally, catalyzes the formation of 6,7-dimethyl-8-ribityllumazine by condensation of 5-amino-6-(D-ribitylamino)uracil with 3,4-dihydroxy-2-butanone 4-phosphate. This is the penultimate step in the biosynthesis of riboflavin. The polypeptide is 6,7-dimethyl-8-ribityllumazine synthase (Clostridium botulinum (strain ATCC 19397 / Type A)).